The primary structure comprises 85 residues: Small ribosomal subunit protein bS18 (85 aa).

The protein belongs to the bacterial ribosomal protein bS18 family. As to quaternary structure, part of the 30S ribosomal subunit. Forms a tight heterodimer with protein bS6.

Functionally, binds as a heterodimer with protein bS6 to the central domain of the 16S rRNA, where it helps stabilize the platform of the 30S subunit. The chain is Small ribosomal subunit protein bS18 from Hamiltonella defensa subsp. Acyrthosiphon pisum (strain 5AT).